The primary structure comprises 298 residues: ATP synthase gamma chain (298 aa).

This sequence belongs to the ATPase gamma chain family. In terms of assembly, F-type ATPases have 2 components, CF(1) - the catalytic core - and CF(0) - the membrane proton channel. CF(1) has five subunits: alpha(3), beta(3), gamma(1), delta(1), epsilon(1). CF(0) has three main subunits: a, b and c.

It is found in the cell inner membrane. Produces ATP from ADP in the presence of a proton gradient across the membrane. The gamma chain is believed to be important in regulating ATPase activity and the flow of protons through the CF(0) complex. This Francisella tularensis subsp. holarctica (strain LVS) protein is ATP synthase gamma chain.